The following is a 378-amino-acid chain: Phosphoserine aminotransferase (378 aa).

R53 is an L-glutamate binding site. Pyridoxal 5'-phosphate contacts are provided by W117, T167, D190, and Q213. The residue at position 214 (K214) is an N6-(pyridoxal phosphate)lysine. 255–256 (NT) is a pyridoxal 5'-phosphate binding site.

It belongs to the class-V pyridoxal-phosphate-dependent aminotransferase family. SerC subfamily. In terms of assembly, homodimer. Pyridoxal 5'-phosphate serves as cofactor.

It is found in the cytoplasm. It catalyses the reaction O-phospho-L-serine + 2-oxoglutarate = 3-phosphooxypyruvate + L-glutamate. The enzyme catalyses 4-(phosphooxy)-L-threonine + 2-oxoglutarate = (R)-3-hydroxy-2-oxo-4-phosphooxybutanoate + L-glutamate. Its pathway is amino-acid biosynthesis; L-serine biosynthesis; L-serine from 3-phospho-D-glycerate: step 2/3. It participates in cofactor biosynthesis; pyridoxine 5'-phosphate biosynthesis; pyridoxine 5'-phosphate from D-erythrose 4-phosphate: step 3/5. In terms of biological role, catalyzes the reversible conversion of 3-phosphohydroxypyruvate to phosphoserine and of 3-hydroxy-2-oxo-4-phosphonooxybutanoate to phosphohydroxythreonine. This Ralstonia pickettii (strain 12J) protein is Phosphoserine aminotransferase.